The following is a 151-amino-acid chain: Inactive oocyte-specific homeobox protein 2 (151 aa).

The interval 1 to 97 (MAEGPSLHPK…PMASRKFRKE (97 aa)) is disordered. The segment covering 37–54 (MRQSPLVTPGSTTKSSLS) has biased composition (polar residues).

The protein belongs to the paired homeobox family. Obox subfamily. As to expression, specifically expressed in oocytes and early embryos.

In terms of biological role, in contrast to other Obox family proteins, displays a truncated homeobox domain and does not bind DNA. The sequence is that of Inactive oocyte-specific homeobox protein 2 from Mus musculus (Mouse).